Here is a 491-residue protein sequence, read N- to C-terminus: Cytochrome P450 2B4 (491 aa).

Ser-128 carries the phosphoserine; by PKA modification. A heme-binding site is contributed by Cys-436.

Belongs to the cytochrome P450 family. Heme is required as a cofactor.

Its subcellular location is the endoplasmic reticulum membrane. It localises to the microsome membrane. The catalysed reaction is an organic molecule + reduced [NADPH--hemoprotein reductase] + O2 = an alcohol + oxidized [NADPH--hemoprotein reductase] + H2O + H(+). Functionally, cytochromes P450 are a group of heme-thiolate monooxygenases. In liver microsomes, this enzyme is involved in an NADPH-dependent electron transport pathway. It oxidizes a variety of structurally unrelated compounds, including steroids, fatty acids, and xenobiotics. In the epoxidation of arachidonic acid it has a unique preference for the 5,6-olefin. The polypeptide is Cytochrome P450 2B4 (CYP2B4) (Oryctolagus cuniculus (Rabbit)).